We begin with the raw amino-acid sequence, 36 residues long: Photosystem II reaction center protein Y (36 aa).

Residues 1–4 (MDTR) lie on the Lumenal side of the membrane. A helical transmembrane segment spans residues 5–23 (LLVIAAPVLVAASWALFNI). The Stromal portion of the chain corresponds to 24 to 36 (GRLAIQQIQRLSR).

The protein belongs to the PsbY family. PSII is composed of 1 copy each of membrane proteins PsbA, PsbB, PsbC, PsbD, PsbE, PsbF, PsbH, PsbI, PsbJ, PsbK, PsbL, PsbM, PsbT, PsbX, PsbY, PsbZ, Psb30/Ycf12, at least 3 peripheral proteins of the oxygen-evolving complex and a large number of cofactors. It forms dimeric complexes.

The protein localises to the plastid. Its subcellular location is the chloroplast thylakoid membrane. Its function is as follows. Loosely associated component of the core of photosystem II (PSII), it is not always seen in crystals. PSII is a light-driven water plastoquinone oxidoreductase, using light energy to abstract electrons from H(2)O, generating a proton gradient subsequently used for ATP formation. This Thalassiosira pseudonana (Marine diatom) protein is Photosystem II reaction center protein Y.